The primary structure comprises 357 residues: Mannonate dehydratase (357 aa).

Belongs to the mannonate dehydratase family. Fe(2+) is required as a cofactor. Mn(2+) serves as cofactor.

The enzyme catalyses D-mannonate = 2-dehydro-3-deoxy-D-gluconate + H2O. It functions in the pathway carbohydrate metabolism; pentose and glucuronate interconversion. Its function is as follows. Catalyzes the dehydration of D-mannonate. The chain is Mannonate dehydratase from Sorangium cellulosum (strain So ce56) (Polyangium cellulosum (strain So ce56)).